The chain runs to 451 residues: Tubulin alpha-1 chain (451 aa).

Q11 is a binding site for GTP. N6-acetyllysine is present on K40. Positions 71, 144, 145, 179, 206, and 228 each coordinate GTP. A Mg(2+)-binding site is contributed by E71. The active site involves E254. The segment at 432 to 451 (YEEVGADSAEGDEEDEGDEY) is disordered.

Belongs to the tubulin family. As to quaternary structure, dimer of alpha and beta chains. A typical microtubule is a hollow water-filled tube with an outer diameter of 25 nm and an inner diameter of 15 nM. Alpha-beta heterodimers associate head-to-tail to form protofilaments running lengthwise along the microtubule wall with the beta-tubulin subunit facing the microtubule plus end conferring a structural polarity. Microtubules usually have 13 protofilaments but different protofilament numbers can be found in some organisms and specialized cells. It depends on Mg(2+) as a cofactor. Undergoes a tyrosination/detyrosination cycle, the cyclic removal and re-addition of a C-terminal tyrosine residue by the enzymes tubulin tyrosine carboxypeptidase (TTCP) and tubulin tyrosine ligase (TTL), respectively. Post-translationally, acetylation of alpha chains at Lys-40 stabilizes microtubules and affects affinity and processivity of microtubule motors. This modification has a role in multiple cellular functions, ranging from cell motility, cell cycle progression or cell differentiation to intracellular trafficking and signaling.

The protein localises to the cytoplasm. The protein resides in the cytoskeleton. It catalyses the reaction GTP + H2O = GDP + phosphate + H(+). Functionally, tubulin is the major constituent of microtubules, a cylinder consisting of laterally associated linear protofilaments composed of alpha- and beta-tubulin heterodimers. Microtubules grow by the addition of GTP-tubulin dimers to the microtubule end, where a stabilizing cap forms. Below the cap, tubulin dimers are in GDP-bound state, owing to GTPase activity of alpha-tubulin. This is Tubulin alpha-1 chain from Gossypium hirsutum (Upland cotton).